We begin with the raw amino-acid sequence, 329 residues long: MAVLSKPVAIPKSGFSLIPVIDMSDPESKHALVKACEDFGFFKVINHGVSAELVSVLEHETVDFFSLPKSEKTQVAGYPFGYGNSKIGRNGDVGWVEYLLMNANHDSGSGPLFPSLLKSPGTFRNALEEYTTSVRKMTFDVLEKITDGLGIKPRNTLSKLVSDQNTDSILRLNHYPPCPLSNKKTNGGKNVIGFGEHTDPQIISVLRSNNTSGLQINLNDGSWISVPPDHTSFFFNVGDSLQVMTNGRFKSVRHRVLANCKKSRVSMIYFAGPSLTQRIAPLTCLIDNEDERLYEEFTWSEYKNSTYNSRLSDNRLQQFERKTIKNLLN.

A Fe2OG dioxygenase domain is found at 165–273 (NTDSILRLNH…RVSMIYFAGP (109 aa)). Fe cation-binding residues include H197, D199, and H254. R264 is an active-site residue. R264 lines the 2-oxoglutarate pocket.

The protein belongs to the iron/ascorbate-dependent oxidoreductase family. GA2OX subfamily. The cofactor is Fe(2+). Preferentially expressed in flowers, siliques, and upper stems. Not expressed in the apex.

It catalyses the reaction gibberellin A1 + 2-oxoglutarate + O2 = gibberellin A8 + succinate + CO2. Its pathway is plant hormone biosynthesis; gibberellin biosynthesis. Catalyzes the 2-beta-hydroxylation of several biologically active gibberellins, leading to the homeostatic regulation of their endogenous level. Catabolism of gibberellins (GAs) plays a central role in plant development. Converts GA9/GA20 to GA51/GA29 and GA4/GA1 to GA34/GA8. The sequence is that of Gibberellin 2-beta-dioxygenase 1 (GA2OX1) from Arabidopsis thaliana (Mouse-ear cress).